We begin with the raw amino-acid sequence, 121 residues long: ATP synthase epsilon chain (121 aa).

Belongs to the ATPase epsilon chain family. As to quaternary structure, F-type ATPases have 2 components, CF(1) - the catalytic core - and CF(0) - the membrane proton channel. CF(1) has five subunits: alpha(3), beta(3), gamma(1), delta(1), epsilon(1). CF(0) has three main subunits: a, b and c.

The protein localises to the cell membrane. In terms of biological role, produces ATP from ADP in the presence of a proton gradient across the membrane. This is ATP synthase epsilon chain from Mycobacterium avium (strain 104).